We begin with the raw amino-acid sequence, 637 residues long: Transcription factor GLABRA 3 (637 aa).

Residues 437 to 486 form the bHLH domain; that stretch reads DETGNHAVLEKKRREKLNERFMTLRKIIPSINKIDKVSILDDTIEYLQEL. A disordered region spans residues 497–521; the sequence is RESTDTETRGTMTMKRKKPCDAGER. The binding with MYB0/GL1 and MYB23 stretch occupies residues 541-637; sequence NVGEAEPADT…EALQRVAWIC (97 aa).

In terms of assembly, efficient DNA binding requires dimerization with another bHLH protein. Homodimer and heterodimer with BHLH2. Interacts directly with TTG1 and MYB0/GL1 to form a complex. Its interaction with TRY prevents MYB0/GL1 binding. Interacts with MYB75/PAP1, MYB90/PAP2, TT2, CPC, MYB23 and MYB66/WER. Interacts with MYB82. As to expression, mostly expressed in roots and flowers. Also present in stems and leaves, and, to a lower extent, in hypocotyls. Expressed in epidermal root hair cells (trichoblasts) and moves to root hairless cells (atrichoblasts) by a cell-to-cell movement through plasmodesmata (at protein level).

It is found in the nucleus. Its function is as follows. Transcription activator, when associated with MYB75/PAP1, MYB90/PAP2 or TT2. Involved in epidermal cell fate specification. Negatively regulates stomata formation, but, in association with TTG1 and MYB0/GL1, promotes trichome formation, branching and endoreplication. Also regulates trichome cell wall maturation. Together with MYB66/WER, promotes the formation of non-hair cells in root epidermis cells in the N position. Whereas together with CPC, promotes the formation of hair cells in root epidermis cells in the H position by inhibiting non-hair cell formation. Also seems to play a role in the activation of anthocyanin biosynthesis, probably together with MYB75/PAP1. Activates the transcription of GL2. The chain is Transcription factor GLABRA 3 (GL3) from Arabidopsis thaliana (Mouse-ear cress).